Here is a 335-residue protein sequence, read N- to C-terminus: Arylacetonitrilase (335 aa).

A CN hydrolase domain is found at 6 to 291 (LKVAITQAQP…EGIVYADLDM (286 aa)). Glu46 (proton acceptor) is an active-site residue. Lys127 is an active-site residue. Catalysis depends on Cys168, which acts as the Nucleophile.

It belongs to the carbon-nitrogen hydrolase superfamily. Nitrilase family.

It catalyses the reaction a nitrile + 2 H2O = a carboxylate + NH4(+). The enzyme catalyses 4-chlorophenylacetonitrile + 2 H2O = 4-chlorophenylacetate + NH4(+). In terms of biological role, nitrilase that hydrolyzes preferentially phenylacetonitrile, (R,S)-mandelonitrile, and 3-indolylacetonitrile. The polypeptide is Arylacetonitrilase (Arthroderma benhamiae (strain ATCC MYA-4681 / CBS 112371) (Trichophyton mentagrophytes)).